A 385-amino-acid polypeptide reads, in one-letter code: Linearmycin resistance permease protein LnrN (385 aa).

6 helical membrane passes run 22–42, 198–218, 239–259, 274–294, 305–325, and 360–380; these read YLIMFAAPLLLTFVFGSMLSG, AAGFSILFVMLTMMGAAGTIL, IGAGYVLSFFVIGWIQFGILL, AAVIVLVSLFLLTVVGIGLMI, LAFGNLFVIATCMVSGMYWPI, and DILGICGILLAFAAITFAAGL. One can recognise an ABC transmembrane type-2 domain in the interval 163 to 382; it reads KTVFAKKHED…AITFAAGLKA (220 aa).

The protein belongs to the ABC-2 integral membrane protein family. The complex is composed of two ATP-binding proteins (LnrL) and two transmembrane proteins (LnrM and LnrN).

The protein localises to the cell membrane. Functionally, required for resistance to linearmycins, a family of antibiotic-specialized metabolites produced by some streptomycetes. Part of the ABC transporter complex LnrLMN that probably facilitates linearmycin removal from the membrane. Responsible for the translocation of the substrate across the membrane. Also mediates KinC-dependent biofilm morphology. This Bacillus subtilis (strain 168) protein is Linearmycin resistance permease protein LnrN.